The sequence spans 327 residues: Genome polyprotein (327 aa).

The disordered stretch occupies residues 65 to 102 (IDAVGDNKKDAKPEQGSIQSNPNKGKEKDVNAGTSGTH).

Belongs to the potyviridae genome polyprotein family. Genome polyprotein of potyviruses undergoes post-translational proteolytic processing by the main proteinase NIa-pro resulting in the production of at least ten individual proteins. The P1 proteinase and the HC-pro cleave only their respective C-termini autocatalytically. 6K1 is essential for proper proteolytic separation of P3 from CI.

The protein localises to the virion. It carries out the reaction RNA(n) + a ribonucleoside 5'-triphosphate = RNA(n+1) + diphosphate. In terms of biological role, an RNA-dependent RNA polymerase that plays an essential role in the virus replication. Its function is as follows. Involved in aphid transmission, cell-to-cell and systemis movement, encapsidation of the viral RNA and in the regulation of viral RNA amplification. This Potato virus Y (strain Chinese) (PVY) protein is Genome polyprotein.